A 513-amino-acid polypeptide reads, in one-letter code: Butyrophilin subfamily 3 member A1 (513 aa).

Positions 1–29 (MKMASFLAFLLLNFRVCLLLLQLLMPHSA) are cleaved as a signal peptide. Ig-like V-type domains lie at 30 to 139 (QFSV…KALV) and 145 to 236 (ALGS…ASIS). Residues 30 to 254 (QFSVLGPSGP…AQRWIAALAG (225 aa)) are Extracellular-facing. Cystine bridges form between Cys-52/Cys-126 and Cys-166/Cys-220. N-linked (GlcNAc...) asparagine glycosylation occurs at Asn-115. The helical transmembrane segment at 255 to 271 (TLPVLLLLLGGAGYFLW) threads the bilayer. The Cytoplasmic segment spans residues 272-513 (QQQEEKKTQF…EPTALTICPA (242 aa)). Residues 322–513 (RGERHSAYNE…EPTALTICPA (192 aa)) enclose the B30.2/SPRY domain.

The protein belongs to the immunoglobulin superfamily. BTN/MOG family. As to quaternary structure, homodimer. In terms of processing, N-glycosylated. Detected on T-cells, natural killer cells, dendritic cells and macrophages (at protein level). Ubiquitous. Highly expressed in heart, pancreas and lung, Moderately expressed in placenta, liver and muscle.

It is found in the cell membrane. Plays a role in T-cell activation and in the adaptive immune response. Regulates the proliferation of activated T-cells. Regulates the release of cytokines and IFNG by activated T-cells. Mediates the response of T-cells toward infected and transformed cells that are characterized by high levels of phosphorylated metabolites, such as isopentenyl pyrophosphate. The sequence is that of Butyrophilin subfamily 3 member A1 (BTN3A1) from Homo sapiens (Human).